Consider the following 405-residue polypeptide: Acetylornithine aminotransferase 1 (405 aa).

Residues 103–104 (GA) and Phe136 each bind pyridoxal 5'-phosphate. A N(2)-acetyl-L-ornithine-binding site is contributed by Arg139. 221 to 224 (DEVQ) is a binding site for pyridoxal 5'-phosphate. Lys250 is modified (N6-(pyridoxal phosphate)lysine). A N(2)-acetyl-L-ornithine-binding site is contributed by Ser278. Thr279 serves as a coordination point for pyridoxal 5'-phosphate.

The protein belongs to the class-III pyridoxal-phosphate-dependent aminotransferase family. ArgD subfamily. In terms of assembly, homodimer. The cofactor is pyridoxal 5'-phosphate.

The protein localises to the cytoplasm. The catalysed reaction is N(2)-acetyl-L-ornithine + 2-oxoglutarate = N-acetyl-L-glutamate 5-semialdehyde + L-glutamate. It participates in amino-acid biosynthesis; L-arginine biosynthesis; N(2)-acetyl-L-ornithine from L-glutamate: step 4/4. The polypeptide is Acetylornithine aminotransferase 1 (Bradyrhizobium diazoefficiens (strain JCM 10833 / BCRC 13528 / IAM 13628 / NBRC 14792 / USDA 110)).